The sequence spans 424 residues: Type II methyltransferase M.XorII (424 aa).

The SAM-dependent MTase C5-type domain occupies 4 to 367 (PIGIDLFAGA…GQIMKALRKK (364 aa)). Residue Cys-83 is part of the active site. Residues 404–424 (RSRPVDRPAPRRHEERELVTA) form a disordered region. A compositionally biased stretch (basic and acidic residues) spans 406–424 (RPVDRPAPRRHEERELVTA).

Belongs to the class I-like SAM-binding methyltransferase superfamily. C5-methyltransferase family.

It catalyses the reaction a 2'-deoxycytidine in DNA + S-adenosyl-L-methionine = a 5-methyl-2'-deoxycytidine in DNA + S-adenosyl-L-homocysteine + H(+). Its function is as follows. A methylase that recognizes the double-stranded sequence 5'-CGATCG-3', methylates C-? on both strands and protects the DNA from cleavage by the XorII endonuclease. This chain is Type II methyltransferase M.XorII (xorIIM), found in Xanthomonas oryzae pv. oryzae (strain KACC10331 / KXO85).